The chain runs to 347 residues: NADH-quinone oxidoreductase subunit H (347 aa).

Transmembrane regions (helical) follow at residues 13 to 33 (LIMI…IAYI), 82 to 102 (AVFL…WAVV), 115 to 135 (VGIL…IMGG), 161 to 181 (IGLV…TDIV), 198 to 218 (FLDW…ISAL), 258 to 278 (AVVL…LPPV), 286 to 306 (VPGI…FAMV), and 321 to 341 (LGWK…AFVL).

This sequence belongs to the complex I subunit 1 family. NDH-1 is composed of 14 different subunits. Subunits NuoA, H, J, K, L, M, N constitute the membrane sector of the complex.

The protein localises to the cell inner membrane. It carries out the reaction a quinone + NADH + 5 H(+)(in) = a quinol + NAD(+) + 4 H(+)(out). NDH-1 shuttles electrons from NADH, via FMN and iron-sulfur (Fe-S) centers, to quinones in the respiratory chain. The immediate electron acceptor for the enzyme in this species is believed to be ubiquinone. Couples the redox reaction to proton translocation (for every two electrons transferred, four hydrogen ions are translocated across the cytoplasmic membrane), and thus conserves the redox energy in a proton gradient. This subunit may bind ubiquinone. This Rhizobium rhizogenes (strain K84 / ATCC BAA-868) (Agrobacterium radiobacter) protein is NADH-quinone oxidoreductase subunit H.